Reading from the N-terminus, the 361-residue chain is KDEL-tailed cysteine endopeptidase CEP2 (361 aa).

The signal sequence occupies residues 1 to 20 (MKKLLLIFLFSLVILQTACG). The propeptide at 21-127 (FDYDDKEIES…FMYDHENLSK (107 aa)) is activation peptide. N-linked (GlcNAc...) asparagine glycans are attached at residues Asn75 and Asn124. Cystine bridges form between Cys149/Cys191, Cys183/Cys224, and Cys282/Cys333. Cys152 is an active-site residue. Active-site residues include His288 and Asn308. The Prevents secretion from ER motif lies at 358-361 (KDEL).

This sequence belongs to the peptidase C1 family. In terms of tissue distribution, expressed in roots, stems, rosette and cauline leaves, flowers, buds and green siliques. Found in the tip of young primary leaves, in very young root tips and at later stages in all tissues of lateral root, including the vascular bundle. Not expressed in lateral root primordia, while directly emerging through the epidermis.

Its subcellular location is the endoplasmic reticulum. Involved in the final stage of developmental programmed cell death and in intercalation of new cells. Cleaves extensins, thus probably supporting the final cell collapse. The chain is KDEL-tailed cysteine endopeptidase CEP2 from Arabidopsis thaliana (Mouse-ear cress).